The sequence spans 138 residues: Acidic phospholipase A2 DsM-a2/DsM-a2' (138 aa).

Positions 1 to 16 are cleaved as a signal peptide; the sequence is MRTLWIVAVCLIGVEG. 7 cysteine pairs are disulfide-bonded: Cys42–Cys131, Cys44–Cys60, Cys59–Cys111, Cys65–Cys138, Cys66–Cys104, Cys73–Cys97, and Cys91–Cys102. Residues Tyr43, Gly45, and Gly47 each coordinate Ca(2+). His63 is a catalytic residue. Asp64 is a Ca(2+) binding site. The active site involves Asp105.

It belongs to the phospholipase A2 family. Group II subfamily. D49 sub-subfamily. It depends on Ca(2+) as a cofactor. As to expression, expressed by the venom gland.

It is found in the secreted. The enzyme catalyses a 1,2-diacyl-sn-glycero-3-phosphocholine + H2O = a 1-acyl-sn-glycero-3-phosphocholine + a fatty acid + H(+). Functionally, exhibits high hydrolytic activities and shows strong preference for the anionic micelles (dPPC with deoxycholate) to the zwitterionic micelles (dPPC with Triton X-100). PLA2 catalyzes the calcium-dependent hydrolysis of the 2-acyl groups in 3-sn-phosphoglycerides. This Daboia siamensis (Eastern Russel's viper) protein is Acidic phospholipase A2 DsM-a2/DsM-a2'.